Here is a 90-residue protein sequence, read N- to C-terminus: MQRLKKSEAKQVVGGLSFWSFSAGVIMIVNAFSTLINTALDISEAANANNANGNGSSYSYKRRNSQKDYFSTGRFRLGLTPGKSSYSFPV.

The helical transmembrane segment at 12 to 32 (VVGGLSFWSFSAGVIMIVNAF) threads the bilayer.

It localises to the membrane. This is an uncharacterized protein from Mycoplasma pneumoniae (strain ATCC 29342 / M129 / Subtype 1) (Mycoplasmoides pneumoniae).